A 147-amino-acid polypeptide reads, in one-letter code: Large ribosomal subunit protein uL15 (147 aa).

A disordered region spans residues 1-45 (MRLEDLRPTPGAMKKRKRVGRGPGSGHGKTSGRGHKGQKARGSGK). A compositionally biased stretch (basic residues) spans 30–44 (TSGRGHKGQKARGSG).

Belongs to the universal ribosomal protein uL15 family. As to quaternary structure, part of the 50S ribosomal subunit.

Its function is as follows. Binds to the 23S rRNA. This Thermotoga sp. (strain RQ2) protein is Large ribosomal subunit protein uL15.